The sequence spans 496 residues: Splicing factor U2AF 65 kDa subunit (496 aa).

The segment covering 1-26 (MSDHQDGMKLEDIERQFLDVAQREGG) has biased composition (basic and acidic residues). Residues 1–142 (MSDHQDGMKL…PKKYRFWDVP (142 aa)) form a disordered region. The segment covering 59 to 77 (KKRKRSRSRDRDTRRRSRS) has biased composition (basic residues). 2 stretches are compositionally biased toward basic and acidic residues: residues 78-96 (RDRGERRGGGGGGDRDRSR) and 105-138 (GGRDEPRRRGGDDEARSRREPEPQKPREPKKYRF). 3 RRM domains span residues 184 to 266 (RRLY…RPRD), 291 to 368 (NKIF…LACA), and 404 to 488 (NMVT…YYDV).

In terms of assembly, forms a heterodimer with the U2AF small subunit.

The protein resides in the nucleus. Its function is as follows. Necessary for the splicing of pre-mRNA. Binds to the polypyrimidine tract of introns early during spliceosome assembly. The polypeptide is Splicing factor U2AF 65 kDa subunit (uaf-1) (Caenorhabditis elegans).